Reading from the N-terminus, the 429-residue chain is Tyrosine--tRNA ligase (429 aa).

Tyrosine 36 is a binding site for L-tyrosine. The short motif at 41 to 50 (PTAASLHAGH) is the 'HIGH' region element. Residues tyrosine 171 and glutamine 175 each coordinate L-tyrosine. The 'KMSKS' region signature appears at 231-235 (KFGKS). Residue lysine 234 coordinates ATP. The 58-residue stretch at 360–417 (ATIVDLLVATGLAESRGAARRTVNEGGAAVNNQKIADPDWTPADGDYLHGRWLVVRRG) folds into the S4 RNA-binding domain.

Belongs to the class-I aminoacyl-tRNA synthetase family. TyrS type 1 subfamily. In terms of assembly, homodimer.

Its subcellular location is the cytoplasm. It catalyses the reaction tRNA(Tyr) + L-tyrosine + ATP = L-tyrosyl-tRNA(Tyr) + AMP + diphosphate + H(+). In terms of biological role, catalyzes the attachment of tyrosine to tRNA(Tyr) in a two-step reaction: tyrosine is first activated by ATP to form Tyr-AMP and then transferred to the acceptor end of tRNA(Tyr). This is Tyrosine--tRNA ligase from Nocardia farcinica (strain IFM 10152).